Here is a 315-residue protein sequence, read N- to C-terminus: uncharacterized protein (315 aa).

2 coiled-coil regions span residues 184–212 and 238–275; these read AGEE…TPEQ and EEHR…YKEK.

This sequence belongs to the IIV-6 287R family.

This is an uncharacterized protein from Acheta domesticus (House cricket).